The following is a 349-amino-acid chain: Protein-glutamate methylesterase/protein-glutamine glutaminase (349 aa).

Residues 5 to 122 (RVLCVDDSAL…REGMLAYSEL (118 aa)) enclose the Response regulatory domain. A 4-aspartylphosphate modification is found at D56. One can recognise a CheB-type methylesterase domain in the interval 152 to 344 (LLSSEKLIAI…QRMLAQISSG (193 aa)). Catalysis depends on residues S164, H190, and D286.

It belongs to the CheB family. Post-translationally, phosphorylated by CheA. Phosphorylation of the N-terminal regulatory domain activates the methylesterase activity.

It localises to the cytoplasm. The catalysed reaction is [protein]-L-glutamate 5-O-methyl ester + H2O = L-glutamyl-[protein] + methanol + H(+). It carries out the reaction L-glutaminyl-[protein] + H2O = L-glutamyl-[protein] + NH4(+). Involved in chemotaxis. Part of a chemotaxis signal transduction system that modulates chemotaxis in response to various stimuli. Catalyzes the demethylation of specific methylglutamate residues introduced into the chemoreceptors (methyl-accepting chemotaxis proteins or MCP) by CheR. Also mediates the irreversible deamidation of specific glutamine residues to glutamic acid. The polypeptide is Protein-glutamate methylesterase/protein-glutamine glutaminase (Yersinia pseudotuberculosis serotype I (strain IP32953)).